Here is a 364-residue protein sequence, read N- to C-terminus: Chorismate synthase (364 aa).

Residues Arg48 and Arg54 each contribute to the NADP(+) site. FMN-binding positions include 125–127 (RSS), Gly282, 297–301 (KPPAS), and Arg323.

The protein belongs to the chorismate synthase family. Homotetramer. Requires FMNH2 as cofactor.

The catalysed reaction is 5-O-(1-carboxyvinyl)-3-phosphoshikimate = chorismate + phosphate. Its pathway is metabolic intermediate biosynthesis; chorismate biosynthesis; chorismate from D-erythrose 4-phosphate and phosphoenolpyruvate: step 7/7. In terms of biological role, catalyzes the anti-1,4-elimination of the C-3 phosphate and the C-6 proR hydrogen from 5-enolpyruvylshikimate-3-phosphate (EPSP) to yield chorismate, which is the branch point compound that serves as the starting substrate for the three terminal pathways of aromatic amino acid biosynthesis. This reaction introduces a second double bond into the aromatic ring system. The chain is Chorismate synthase from Chloroflexus aggregans (strain MD-66 / DSM 9485).